Consider the following 253-residue polypeptide: Vacuolar v-SNARE NYV1 (253 aa).

Over methionine 1–asparagine 231 the chain is Cytoplasmic. Positions leucine 147–aspartate 166 are disordered. A compositionally biased stretch (low complexity) spans asparagine 148–asparagine 162. In terms of domain architecture, v-SNARE coiled-coil homology spans isoleucine 167–glutamine 227. A helical; Anchor for type IV membrane protein transmembrane segment spans residues isoleucine 232–leucine 252. Residue tryptophan 253 is a topological domain, vacuolar.

This sequence belongs to the synaptobrevin family. Present in a pentameric cis-SNARE complex composed of the v-SNAREs NYV1, VTI1 and YKT6, and the t-SNAREs VAM3 and VAM7 on vacuolar membranes. Interacts in trans with the cognate t-SNARE VAM3 during the docking step of homotypic vacuolar fusion. Interacts with the vacuolar transporter chaperone (VTC) complex and the vacuolar Ca(2+)-ATPase PMC1.

It is found in the vacuole membrane. Its function is as follows. Vacuolar v-SNARE required for docking. Only involved in homotypic vacuole fusion. Required for Ca(2+) efflux from the vacuolar lumen, a required signal for subsequent membrane fusion events, by inhibiting vacuolar Ca(2+)-ATPase PMC1 and promoting Ca(2+) release when forming trans-SNARE assemblies during the docking step. This chain is Vacuolar v-SNARE NYV1 (NYV1), found in Saccharomyces cerevisiae (strain ATCC 204508 / S288c) (Baker's yeast).